The chain runs to 220 residues: Histone deacetylase complex subunit SAP30 (220 aa).

An interaction with NCOR1 region spans residues 1–129 (MNGFTPDEMS…QSVRNRRKRK (129 aa)). Position 5 is a phosphothreonine (threonine 5). The Atypical zinc finger occupies 67 to 115 (CCLREDGERCGRAAGNASFSKRIQKSISQKKVKIELDKSARHLYICDYH). Lysine 87 is covalently cross-linked (Glycyl lysine isopeptide (Lys-Gly) (interchain with G-Cter in SUMO2)). Residues 123–143 (RNRRKRKGSDDDGGDSPVQDI) are disordered. Residues 130–220 (GSDDDGGDSP…SDLKVDSGVH (91 aa)) are interaction with SIN3A. Serine 131 and serine 138 each carry phosphoserine. A Phosphothreonine modification is found at threonine 145. Glycyl lysine isopeptide (Lys-Gly) (interchain with G-Cter in SUMO2) cross-links involve residues lysine 194, lysine 205, and lysine 214.

Belongs to the SAP30 family. In terms of assembly, component of the histone deacetylase complex that includes at least SIN3A, HDAC1 and HDAC2. Found in a complex composed of at least SINHCAF, SIN3A, HDAC1, SAP30, RBBP4, OGT and TET1. Interacts with HDAC1. Interacts with SIN3A, SIN3B, HDAC2, RBBP4 and NCOR1. Interacts with SAMSN1. Interacts with HCFC1. Interacts with SAP30BP. As to expression, expressed in all tissues tested with highest levels in pancreas, ovary, PBL, spleen and thymus; lowest levels in brain, placenta, lung and kidney.

It is found in the nucleus. Functionally, involved in the functional recruitment of the Sin3-histone deacetylase complex (HDAC) to a specific subset of N-CoR corepressor complexes. Capable of transcription repression by N-CoR. Active in deacetylating core histone octamers (when in a complex) but inactive in deacetylating nucleosomal histones. (Microbial infection) Involved in transcriptional repression of HHV-1 genes TK and gC. This Homo sapiens (Human) protein is Histone deacetylase complex subunit SAP30.